Reading from the N-terminus, the 251-residue chain is MTSLVSLENVSVSFGQRRVLSDVSLELSPGKILTLLGPNGAGKSTLVRVVLGLVAPDEGVIKRNGQLRIGYVPQKLYLDTTLPLTVNRFLRLRPCTQKTDILPALKRVQAGHLIDAPMQKLSGGETQRVLLARALLNRPQLLVLDEPTQGVDVNGQVALYDLIDQLRRELDCAVLMVSHDLHLVMAKTDEVLCLNHHICCSGAPEVVSMHPEFISMFGPRGAEQLGIYRHHHNHRHDLQGRIVLRRGNGHS.

In terms of domain architecture, ABC transporter spans 5-220; the sequence is VSLENVSVSF…PEFISMFGPR (216 aa). Residue 37–44 participates in ATP binding; that stretch reads GPNGAGKS.

This sequence belongs to the ABC transporter superfamily. Zinc importer (TC 3.A.1.15.5) family. The complex is composed of two ATP-binding proteins (ZnuC), two transmembrane proteins (ZnuB) and a solute-binding protein (ZnuA).

It localises to the cell inner membrane. The catalysed reaction is Zn(2+)(out) + ATP(in) + H2O(in) = Zn(2+)(in) + ADP(in) + phosphate(in) + H(+)(in). Part of the ABC transporter complex ZnuABC involved in zinc import. Responsible for energy coupling to the transport system. In Salmonella typhi, this protein is Zinc import ATP-binding protein ZnuC.